The chain runs to 107 residues: Integration host factor subunit beta (107 aa).

A compositionally biased stretch (basic and acidic residues) spans 82–101 (PGKELRERVDRRAGEPLKAE). Positions 82 to 107 (PGKELRERVDRRAGEPLKAEEPDDDL) are disordered.

It belongs to the bacterial histone-like protein family. As to quaternary structure, heterodimer of an alpha and a beta chain.

In terms of biological role, this protein is one of the two subunits of integration host factor, a specific DNA-binding protein that functions in genetic recombination as well as in transcriptional and translational control. This Paraburkholderia phytofirmans (strain DSM 17436 / LMG 22146 / PsJN) (Burkholderia phytofirmans) protein is Integration host factor subunit beta.